A 384-amino-acid polypeptide reads, in one-letter code: Na(+)/H(+) antiporter NhaA (384 aa).

11 consecutive transmembrane segments (helical) span residues 7–27 (FYNLETIGGILLFIAAVLAII), 58–78 (LLLWINDGLMAIYFLLIGLEI), 94–114 (LVPALTALAGLLFPALIFIFF), 124–144 (GWAIPTATDIAFTLGIVSLLG), 153–173 (ILLTAIAIFDDIAAIVIIALF), 179–199 (SLLSLSLALVFTLILIGLNYF), 204–224 (ISVFMLFGVALWIAVLKSGVH), 256–276 (VVFLILPLFAFANAGVSFVGL), 285–305 (VVLGIGLGLFLGKQLGIFLSL), 325–345 (VYGIALICGVGFTMSLFIGSL), and 357–377 (MVKIGVVFGSFIAGLTGFLVL).

This sequence belongs to the NhaA Na(+)/H(+) (TC 2.A.33) antiporter family.

Its subcellular location is the cell inner membrane. The catalysed reaction is Na(+)(in) + 2 H(+)(out) = Na(+)(out) + 2 H(+)(in). Its function is as follows. Na(+)/H(+) antiporter that extrudes sodium in exchange for external protons. In Legionella pneumophila (strain Corby), this protein is Na(+)/H(+) antiporter NhaA.